The following is a 67-amino-acid chain: Bombesin (67 aa).

Positions 1–30 (MLLLSAVKTLLLAWLGIVLVFMSIIKSAML) are cleaved as a signal peptide. A propeptide spanning residues 31 to 49 (DFLQEAGKLEGIETYKKEA) is cleaved from the precursor. Residue Gln50 is modified to Pyrrolidone carboxylic acid. Met64 is subject to Methionine amide.

Expressed by the skin glands.

Its subcellular location is the secreted. Its function is as follows. Stimulates smooth muscle contraction in isolated rat stomach strip. This chain is Bombesin, found in Rana shuchinae (Sichuan frog).